We begin with the raw amino-acid sequence, 235 residues long: Sugar fermentation stimulation protein homolog (235 aa).

It belongs to the SfsA family.

The sequence is that of Sugar fermentation stimulation protein homolog from Pseudomonas paraeruginosa (strain DSM 24068 / PA7) (Pseudomonas aeruginosa (strain PA7)).